Consider the following 350-residue polypeptide: MLEQLQTLKNEAETQINEASDLKTLNDLRVKYLGKKGPMTEIMKQMGKLSAEERPKMGSLANEVRTALTEAISSKQQILETEAINEKLKSETIDVTLPGTAPSIGTKHLLTQVIEEMEDMFIGMGYEIAEGPEVELDYYNFEALNLPKDHPARDMQDSFYITENTLLRTQTSPVQARTMEKHDFSKGPIKVICPGKVYRRDNDDATHSHQFTQIEGLVVGENITFADLKGTLTVLAKTMFGEEREIRLRPSFFPFTEPSVEMDISCFKCGGKGCRVCKGTGWIEILGSGMVHPNVLEMSRIDSTRYSGFAFGLGPERVAMLKYAVDDIRHLYTNDLRFTKQFQSTETGEI.

Glutamate 257 is a binding site for Mg(2+).

This sequence belongs to the class-II aminoacyl-tRNA synthetase family. Phe-tRNA synthetase alpha subunit type 1 subfamily. Tetramer of two alpha and two beta subunits. Mg(2+) serves as cofactor.

The protein resides in the cytoplasm. The catalysed reaction is tRNA(Phe) + L-phenylalanine + ATP = L-phenylalanyl-tRNA(Phe) + AMP + diphosphate + H(+). This chain is Phenylalanine--tRNA ligase alpha subunit, found in Listeria monocytogenes serotype 4b (strain CLIP80459).